We begin with the raw amino-acid sequence, 343 residues long: Cyclic AMP-AMP-AMP synthase (343 aa).

Belongs to the CD-NTase family. D01 subfamily. The cofactor is Mg(2+).

The catalysed reaction is 3 ATP = 2',3',3'-c-tri-AMP + 3 diphosphate. Cyclic nucleotide synthase (second messenger synthase) of a CBASS antivirus system. CBASS (cyclic oligonucleotide-based antiphage signaling system) provides immunity against bacteriophage. The CD-NTase protein synthesizes cyclic nucleotides in response to infection; these serve as specific second messenger signals. The signals activate a diverse range of effectors, leading to bacterial cell death and thus abortive phage infection. A type II-C(AAAA) CBASS system. Its function is as follows. Cyclic trinucleotide synthase that catalyzes the synthesis of 2',3',3'-cyclic AMP-AMP-AMP (2',3',3'-c-tri-AMP or 2'3'3'-cAAA) as the major product, as well as another cyclic AMP(4) 2'-5'-linked minor product that acts as a second messenger for cell signal transduction. This chain is Cyclic AMP-AMP-AMP synthase, found in Acinetobacter sp. (strain ATCC 27244 / 9458).